The primary structure comprises 276 residues: MLHRSLACFAVPADRKAFMELVKTLRYRTEAPISDCSAALKETDGDMDAAMQVLRKRGAARAMKKGDRVTEHGFVVSCVGSTPQSGAAIVTICSETDFAARNEHFQRVCMQVRDQLCKLMDATNGAVLANPEEAVKHLSDVMAEELRVAIAVLGENMRVRSIAPLVPAPHVSERLLIGSYTHGSLNVDNVGRIVGLVALSQVRENEVVPKDVLTSVGRHFVATSGAEGNYAHQNFFGSETETVGKWLKQRGLKFSSSLVQEFGKEPVVHTAPEPHR.

This sequence belongs to the EF-Ts family.

Its subcellular location is the mitochondrion. Functionally, associates with the EF-Tu.GDP complex and induces the exchange of GDP to GTP. It remains bound to the aminoacyl-tRNA.EF-Tu.GTP complex up to the GTP hydrolysis stage on the ribosome. The polypeptide is Elongation factor Ts, mitochondrial (Leishmania major).